Consider the following 356-residue polypeptide: UDP-N-acetylglucosamine--N-acetylmuramyl-(pentapeptide) pyrophosphoryl-undecaprenol N-acetylglucosamine transferase (356 aa).

UDP-N-acetyl-alpha-D-glucosamine is bound by residues 12-14, Asn124, Arg163, Ser188, Ile242, and Gln287; that span reads TGG.

This sequence belongs to the glycosyltransferase 28 family. MurG subfamily.

It is found in the cell inner membrane. It carries out the reaction di-trans,octa-cis-undecaprenyl diphospho-N-acetyl-alpha-D-muramoyl-L-alanyl-D-glutamyl-meso-2,6-diaminopimeloyl-D-alanyl-D-alanine + UDP-N-acetyl-alpha-D-glucosamine = di-trans,octa-cis-undecaprenyl diphospho-[N-acetyl-alpha-D-glucosaminyl-(1-&gt;4)]-N-acetyl-alpha-D-muramoyl-L-alanyl-D-glutamyl-meso-2,6-diaminopimeloyl-D-alanyl-D-alanine + UDP + H(+). It participates in cell wall biogenesis; peptidoglycan biosynthesis. Functionally, cell wall formation. Catalyzes the transfer of a GlcNAc subunit on undecaprenyl-pyrophosphoryl-MurNAc-pentapeptide (lipid intermediate I) to form undecaprenyl-pyrophosphoryl-MurNAc-(pentapeptide)GlcNAc (lipid intermediate II). In Pseudomonas savastanoi pv. phaseolicola (strain 1448A / Race 6) (Pseudomonas syringae pv. phaseolicola (strain 1448A / Race 6)), this protein is UDP-N-acetylglucosamine--N-acetylmuramyl-(pentapeptide) pyrophosphoryl-undecaprenol N-acetylglucosamine transferase.